The following is a 258-amino-acid chain: MTLKARIIPCLDVKDGRVVKGVNFVDLIDAGDPVEAAKAYDAAGADELCFLDITASSDNRDTIFDVVSRTADHCFMPVTVGGGVRSVADIRKLLLCGADKVSINSAAVKDPDFVAQAADKFGNQCIVVSIDAKRVSKDGEADRWEIFTHGGRQPTGIDAVEFAIKMVERGAGELLVTSMDRDGTKSGYDIGLTRSIADQVRVPVIASGGVGTLDDLVAGVRDGHATAVLAASIFHFGTYSIGEAKSYMAEHGIAMRLD.

Residues aspartate 12 and aspartate 131 contribute to the active site.

This sequence belongs to the HisA/HisF family. Heterodimer of HisH and HisF.

The protein localises to the cytoplasm. The catalysed reaction is 5-[(5-phospho-1-deoxy-D-ribulos-1-ylimino)methylamino]-1-(5-phospho-beta-D-ribosyl)imidazole-4-carboxamide + L-glutamine = D-erythro-1-(imidazol-4-yl)glycerol 3-phosphate + 5-amino-1-(5-phospho-beta-D-ribosyl)imidazole-4-carboxamide + L-glutamate + H(+). It participates in amino-acid biosynthesis; L-histidine biosynthesis; L-histidine from 5-phospho-alpha-D-ribose 1-diphosphate: step 5/9. In terms of biological role, IGPS catalyzes the conversion of PRFAR and glutamine to IGP, AICAR and glutamate. The HisF subunit catalyzes the cyclization activity that produces IGP and AICAR from PRFAR using the ammonia provided by the HisH subunit. The sequence is that of Imidazole glycerol phosphate synthase subunit HisF (hisF) from Agrobacterium fabrum (strain C58 / ATCC 33970) (Agrobacterium tumefaciens (strain C58)).